The chain runs to 1284 residues: MSKLLNNNNHKNLTNYLKFGKGIINNLNNKSKQVGIISFISQSSIQSQSSIQSQSFLSINNNSNNKYFSTKLNKNEKISEKTTTRKIEDIYQKKTPTEHVLLRPDSYIGTIEKIEDDMWVLSNSMFNKEKKTIELNNDNNEKNVESTTTTTTKTNKKPLTYIHPIKATYIPGLLKIYDEILVNAADNKKRDSKMSFIKVEINPNENSISIMNDGKGIPVVMHQTENCYVVEMVMGNLMSGSNFNDSELKVVGGRNGFGAKLTNIFSKEFTVETVDKSSGKKYFQRWSNNMGDRSEPIITPIGEGESDYTKITFKPDLEKFKIKSLWDDNILQLMERRLYDIAGCNTELMVTLNGKRLNYNFQSYVKLYEHHLNNSTKREDNEEQYREESFEFGEISPRWKIGIGLSETGQFTQVSFVNSINTVKGGTHVNFLADQIVRYVGEKLKKKHSDLEIRPMNIKHHLALFVNCLVDNPSFDSQSKETLTTKPMLFGSTPEIPESLLAQFVKNSKIIERVAGWALMKQKADLIHSTSGRQSKTTLIKSISKLDDANWAGGLKSKECTLIITEGDSAKSLALAGLSVVGRNSYGVFPLRGKLLNVRDVASKQLLSNEEINNLTTILGLSHKNSYDTDESMEDLRYGRVMIMADQDHDGSHIKGLVMNFIHYFWPNLLKRGFLVEFVTPIIKATKSSTQKKSFFTIKDYEKWRETISSDQLKQYTIKYYKGLGTSTSAEAKEYFSNLDKHVIKFIWGDEADDLIKMAFAKDLSSLRQRWIKETDMSQGIDHSIKEITYPDFINKELIHYSWAANLRSIPSLIDGLKPGQRKILFASFKRRLTNEIKVSQLSGYVAEQTSYHHGEQSLNSTIVKMAHNFVGSNNLPLLTPSGQFGTRLQGGSDSASARYIFTKLEPVARYLFNELDDPLLNYLEEEGESIQPDYYIPIIPMLLVNGSEGIGVGMSTSIPLFSPIDIIDQLMLRLNNQVALKKLIPWYRGFKGTISPDRHTYRTNGVIKLVGRNLEITELPIGRWTSDYKEVLNDLIDKDVIKSFQESNTENSVHFTILLNNNQLEQMEDLTENELIKLFKLSASLNFHLTCFDENSKIQKLESVEEIIDQFYKVRLQFYGKRREYLLKSLDNQIKRLTTTIQFLEVIASGKLKIQGRSKQDLIKELESGEIVGFENFGTHPPEVYQHLFSLSILDITKERIDNLTNQLTKRKSEHQSISSSDPKSLWTADLQQLKEYLEKSDKEFQKKPLKTSSSSSFDVSSSSESAKLSSTRKSKTDKIKSK.

Residues 1–35 (MSKLLNNNNHKNLTNYLKFGKGIINNLNNKSKQVG) constitute a mitochondrion transit peptide. ATP-binding positions include Asn-183, Asn-212, 240 to 242 (GSN), and 253 to 260 (GRNGFGAK). Positions 445-447 (KKK) are interaction with DNA. 478-480 (QSK) contributes to the ATP binding site. The Toprim domain occupies 560–677 (CTLIITEGDS…NLLKRGFLVE (118 aa)). 3 residues coordinate Mg(2+): Glu-566, Asp-646, and Asp-648. The region spanning 810–1232 (IPSLIDGLKP…DPKSLWTADL (423 aa)) is the Topo IIA-type catalytic domain. Tyr-900 acts as the O-(5'-phospho-DNA)-tyrosine intermediate in catalysis. Positions 1245–1284 (EFQKKPLKTSSSSSFDVSSSSESAKLSSTRKSKTDKIKSK) are disordered. Residues 1254–1271 (SSSSSFDVSSSSESAKLS) are compositionally biased toward low complexity.

The protein belongs to the type II topoisomerase family. In terms of assembly, homodimer. Mg(2+) is required as a cofactor. Mn(2+) serves as cofactor. Requires Ca(2+) as cofactor.

The protein localises to the mitochondrion. The enzyme catalyses ATP-dependent breakage, passage and rejoining of double-stranded DNA.. Functionally, control of topological states of DNA by transient breakage and subsequent rejoining of DNA strands. Topoisomerase II makes double-strand breaks. The sequence is that of DNA topoisomerase 2, mitochondrial (top2mt) from Dictyostelium discoideum (Social amoeba).